The following is a 445-amino-acid chain: Ribosomal protein uS12 methylthiotransferase RimO (445 aa).

An MTTase N-terminal domain is found at 4 to 119 (YKVGMVSLGC…INEAIMNFIN (116 aa)). Positions 13, 48, 82, 157, 161, and 164 each coordinate [4Fe-4S] cluster. A Radical SAM core domain is found at 143 to 373 (TTDKATAYLR…MLLQKELSEE (231 aa)). In terms of domain architecture, TRAM spans 376 to 441 (KNKLGREYDV…EYDLVGVVCN (66 aa)).

Belongs to the methylthiotransferase family. RimO subfamily. [4Fe-4S] cluster serves as cofactor.

The protein localises to the cytoplasm. The enzyme catalyses L-aspartate(89)-[ribosomal protein uS12]-hydrogen + (sulfur carrier)-SH + AH2 + 2 S-adenosyl-L-methionine = 3-methylsulfanyl-L-aspartate(89)-[ribosomal protein uS12]-hydrogen + (sulfur carrier)-H + 5'-deoxyadenosine + L-methionine + A + S-adenosyl-L-homocysteine + 2 H(+). In terms of biological role, catalyzes the methylthiolation of an aspartic acid residue of ribosomal protein uS12. The chain is Ribosomal protein uS12 methylthiotransferase RimO from Clostridium perfringens (strain SM101 / Type A).